We begin with the raw amino-acid sequence, 544 residues long: Chromosomal replication initiator protein DnaA (544 aa).

Residues Met-1–Thr-71 are domain I, interacts with DnaA modulators. Residues Thr-71–Ser-207 form a domain II region. Residues Ala-90–Gly-105 show a composition bias toward low complexity. Disordered stretches follow at residues Ala-90–Ala-111 and Ala-180–Met-203. The segment covering Ser-191–Thr-200 has biased composition (polar residues). The domain III, AAA+ region stretch occupies residues Lys-208–Ser-424. Gly-252, Gly-254, Lys-255, and Thr-256 together coordinate ATP. The segment at Lys-425–Gly-544 is domain IV, binds dsDNA.

This sequence belongs to the DnaA family. As to quaternary structure, oligomerizes as a right-handed, spiral filament on DNA at oriC.

The protein resides in the cytoplasm. In terms of biological role, plays an essential role in the initiation and regulation of chromosomal replication. ATP-DnaA binds to the origin of replication (oriC) to initiate formation of the DNA replication initiation complex once per cell cycle. Binds the DnaA box (a 9 base pair repeat at the origin) and separates the double-stranded (ds)DNA. Forms a right-handed helical filament on oriC DNA; dsDNA binds to the exterior of the filament while single-stranded (ss)DNA is stabiized in the filament's interior. The ATP-DnaA-oriC complex binds and stabilizes one strand of the AT-rich DNA unwinding element (DUE), permitting loading of DNA polymerase. After initiation quickly degrades to an ADP-DnaA complex that is not apt for DNA replication. Binds acidic phospholipids. This chain is Chromosomal replication initiator protein DnaA, found in Paraburkholderia xenovorans (strain LB400).